The following is a 795-amino-acid chain: Phenylalanine--tRNA ligase beta subunit (795 aa).

The 110-residue stretch at 39 to 148 folds into the tRNA-binding domain; sequence AGSFHGVVVG…ADAPIGTDIR (110 aa). One can recognise a B5 domain in the interval 401 to 476; the sequence is PKRATITLRR…RVYGYNNIPD (76 aa). 4 residues coordinate Mg(2+): Asp454, Asp460, Glu463, and Glu464. The FDX-ACB domain occupies 701 to 794; the sequence is SRFPANRRDI…LKERFQASLR (94 aa).

The protein belongs to the phenylalanyl-tRNA synthetase beta subunit family. Type 1 subfamily. In terms of assembly, tetramer of two alpha and two beta subunits. The cofactor is Mg(2+).

It is found in the cytoplasm. The catalysed reaction is tRNA(Phe) + L-phenylalanine + ATP = L-phenylalanyl-tRNA(Phe) + AMP + diphosphate + H(+). The protein is Phenylalanine--tRNA ligase beta subunit of Escherichia coli O157:H7.